The primary structure comprises 222 residues: UPF0758 protein Lcho_0695 (222 aa).

Residues 100–222 (VFDSPQAVRD…VVSFAERGLL (123 aa)) enclose the MPN domain. Zn(2+) contacts are provided by H171, H173, and D184. The JAMM motif signature appears at 171–184 (HNHPSGVAEPSRAD).

It belongs to the UPF0758 family.

The sequence is that of UPF0758 protein Lcho_0695 from Leptothrix cholodnii (strain ATCC 51168 / LMG 8142 / SP-6) (Leptothrix discophora (strain SP-6)).